We begin with the raw amino-acid sequence, 323 residues long: Transmembrane protein 171 (323 aa).

Helical transmembrane passes span 22–42 (IFFL…ISIF), 57–77 (MVLK…VILA), 112–132 (LIFG…GIWV), and 159–179 (FLSL…FFVV). Residues 251–268 (YSSLFNLSRTPTPENQGA) show a composition bias toward polar residues. The tract at residues 251–323 (YSSLFNLSRT…LGAPSESSPP (73 aa)) is disordered. Over residues 281–290 (SGPGSSSESS) the composition is skewed to low complexity.

It localises to the membrane. This Rattus norvegicus (Rat) protein is Transmembrane protein 171 (Tmem171).